The primary structure comprises 369 residues: H-2 class I histocompatibility antigen, K-K alpha chain (369 aa).

The first 21 residues, 1–21 (MAPCMLLLLLAAALAPTQTRA), serve as a signal peptide directing secretion. Positions 22–111 (GPHSLRYFHT…ALRYYNQSAG (90 aa)) are alpha-1. The Extracellular segment spans residues 22–305 (GPHSLRYFHT…EPPPSTVSNT (284 aa)). N107 carries an N-linked (GlcNAc...) asparagine glycan. The tract at residues 112–203 (GSHTFQRMYG…QLGNATLPRT (92 aa)) is alpha-2. A disulfide bridge connects residues C122 and C185. N197 carries an N-linked (GlcNAc...) asparagine glycan. Residues 204 to 295 (DSPKAHVTRH…GLPEPLTLRW (92 aa)) are alpha-3. The Ig-like C1-type domain occupies 206–294 (PKAHVTRHSR…QGLPEPLTLR (89 aa)). C224 and C280 are oxidised to a cystine. A connecting peptide region spans residues 296–305 (EPPPSTVSNT). Residues 306–328 (VIIAVLVVLGAAIVTGAVVAFVM) form a helical membrane-spanning segment. The Cytoplasmic portion of the chain corresponds to 329 to 369 (KMRRRNTGGKGGDYALAPGSQTSDLSLPDCKVMVHDPHSLA). 2 positions are modified to phosphoserine: S351 and S354.

It belongs to the MHC class I family. As to quaternary structure, heterodimer of an alpha chain and a beta chain (beta-2-microglobulin).

It localises to the membrane. Involved in the presentation of foreign antigens to the immune system. The polypeptide is H-2 class I histocompatibility antigen, K-K alpha chain (H2-K1) (Mus musculus (Mouse)).